We begin with the raw amino-acid sequence, 741 residues long: Protein O-mannosyl-transferase TMTC4 (741 aa).

Topologically, residues 1-14 are cytoplasmic; the sequence is MAVLDTDLDHILPS. A helical membrane pass occupies residues 15–35; that stretch reads SVLPPFWAKLVVGSVAIVCFA. Residues 36–111 lie on the Extracellular side of the membrane; that stretch reads RSYDGDFVFD…FHPVGFHVVN (76 aa). Asn-78 carries an N-linked (GlcNAc...) asparagine glycan. A helical transmembrane segment spans residues 112-132; sequence ILLHSGISVLMVDVFSVLFGG. At 133–141 the chain is on the cytoplasmic side; the sequence is LQYTSKGRR. A helical membrane pass occupies residues 142 to 162; the sequence is LHLAPRASLLAALLFAVHPVH. The Extracellular portion of the chain corresponds to 163-165; it reads TEC. The chain crosses the membrane as a helical span at residues 166 to 186; that stretch reads VAGVVGRADLLCALFFLLSFL. The Cytoplasmic segment spans residues 187 to 198; that stretch reads GYCKAFRESNKE. Residues 199–219 traverse the membrane as a helical segment; the sequence is GAHSSTFWVLLSIFLGAVAML. Residues 220-224 are Extracellular-facing; it reads CKEQG. A helical transmembrane segment spans residues 225–245; sequence ITVLGLNAVFDILVIGKFNVL. Topologically, residues 246–268 are cytoplasmic; the sequence is EIVQKVLHKDKSLENLGMLRNGG. The chain crosses the membrane as a helical span at residues 269–288; the sequence is LLFRMTLLTSGGAGMLYVRW. At 289–354 the chain is on the extracellular side; that stretch reads RIMGTGPPAF…PLIKSISDWR (66 aa). Residues 355–375 form a helical membrane-spanning segment; the sequence is VIALAALWFCLIGLICQALCS. Topologically, residues 376-382 are cytoplasmic; the sequence is EDGHKRR. Residues 383–403 form a helical membrane-spanning segment; sequence ILTLGLGFLVIPFLPASNLFF. Topologically, residues 404-412 are extracellular; the sequence is RVGFVVAER. Residues 413-433 traverse the membrane as a helical segment; sequence VLYLPSVGYCVLLTFGFGALS. The Cytoplasmic segment spans residues 434 to 440; it reads KHTKKKK. Residues 441–461 traverse the membrane as a helical segment; that stretch reads LIAAVVLGILFINTLRCVLRS. Topologically, residues 462-741 are extracellular; it reads GEWRSEEQLF…KLELMQKKAV (280 aa). 7 TPR repeats span residues 482 to 515, 516 to 549, 550 to 583, 584 to 617, 618 to 651, 652 to 685, and 686 to 719; these read AKVHYNIGKNLADKGNQTAAIRYYREAVRLNPKY, VHAMNNLGNILKERNELQEAEELLSLAVQIQPDF, AAAWMNLGIVQNSLKRFEAAEQSYRTAIKHRRKY, PDCYYNLGRLYADLNRHVDALNAWRNATVLKPEH, SLAWNNMIILLDNTGNLAQAEAVGREALELIPND, HSLMFSLANVLGKSQKYKESEALFLKAIKANPNA, and ASYHGNLAVLYHRWGHLDLAKKHYEISLQLDPTA. N-linked (GlcNAc...) asparagine glycosylation occurs at Asn-497. Asn-609 carries N-linked (GlcNAc...) asparagine glycosylation.

It belongs to the TMTC family.

The protein resides in the membrane. The protein localises to the endoplasmic reticulum. It carries out the reaction a di-trans,poly-cis-dolichyl beta-D-mannosyl phosphate + L-seryl-[protein] = 3-O-(alpha-D-mannosyl)-L-seryl-[protein] + a di-trans,poly-cis-dolichyl phosphate + H(+). It catalyses the reaction a di-trans,poly-cis-dolichyl beta-D-mannosyl phosphate + L-threonyl-[protein] = 3-O-(alpha-D-mannosyl)-L-threonyl-[protein] + a di-trans,poly-cis-dolichyl phosphate + H(+). It participates in protein modification; protein glycosylation. Its function is as follows. Transfers mannosyl residues to the hydroxyl group of serine or threonine residues. The 4 members of the TMTC family are O-mannosyl-transferases dedicated primarily to the cadherin superfamily, each member seems to have a distinct role in decorating the cadherin domains with O-linked mannose glycans at specific regions. Also acts as O-mannosyl-transferase on other proteins such as PDIA3. The protein is Protein O-mannosyl-transferase TMTC4 of Homo sapiens (Human).